The primary structure comprises 343 residues: Protein RecA (343 aa).

An ATP-binding site is contributed by 64-71 (GPESSGKT).

The protein belongs to the RecA family.

The protein resides in the cytoplasm. Functionally, can catalyze the hydrolysis of ATP in the presence of single-stranded DNA, the ATP-dependent uptake of single-stranded DNA by duplex DNA, and the ATP-dependent hybridization of homologous single-stranded DNAs. It interacts with LexA causing its activation and leading to its autocatalytic cleavage. In Bacillus cereus (strain ATCC 14579 / DSM 31 / CCUG 7414 / JCM 2152 / NBRC 15305 / NCIMB 9373 / NCTC 2599 / NRRL B-3711), this protein is Protein RecA.